A 198-amino-acid chain; its full sequence is Protein GrpE (198 aa).

Residues 1–58 are disordered; sequence MTEKDQSVNNEEFAEKEDNTAKDSNTDEQIEKTASEDDVQNDSSAVDDKEKEIQQLKE. Composition is skewed to basic and acidic residues over residues 16–35 and 46–58; these read KEDN…KTAS and VDDK…QLKE.

The protein belongs to the GrpE family. In terms of assembly, homodimer.

The protein resides in the cytoplasm. In terms of biological role, participates actively in the response to hyperosmotic and heat shock by preventing the aggregation of stress-denatured proteins, in association with DnaK and GrpE. It is the nucleotide exchange factor for DnaK and may function as a thermosensor. Unfolded proteins bind initially to DnaJ; upon interaction with the DnaJ-bound protein, DnaK hydrolyzes its bound ATP, resulting in the formation of a stable complex. GrpE releases ADP from DnaK; ATP binding to DnaK triggers the release of the substrate protein, thus completing the reaction cycle. Several rounds of ATP-dependent interactions between DnaJ, DnaK and GrpE are required for fully efficient folding. In Staphylococcus carnosus (strain TM300), this protein is Protein GrpE.